The following is a 32-amino-acid chain: Ranatuerin-2BYa (32 aa).

Cys-27 and Cys-32 form a disulfide bridge.

In terms of tissue distribution, expressed by the skin glands.

Its subcellular location is the secreted. Its function is as follows. Antibacterial activity against Gram-positive bacterium S.aureus and Gram-negative bacterium E.coli. Weak hemolytic activity. This Rana boylii (Foothill yellow-legged frog) protein is Ranatuerin-2BYa.